The primary structure comprises 294 residues: 4-hydroxy-tetrahydrodipicolinate synthase (294 aa).

T46 provides a ligand contact to pyruvate. Y135 acts as the Proton donor/acceptor in catalysis. The active-site Schiff-base intermediate with substrate is K164. I205 contributes to the pyruvate binding site.

The protein belongs to the DapA family. As to quaternary structure, homotetramer; dimer of dimers.

Its subcellular location is the cytoplasm. It catalyses the reaction L-aspartate 4-semialdehyde + pyruvate = (2S,4S)-4-hydroxy-2,3,4,5-tetrahydrodipicolinate + H2O + H(+). It participates in amino-acid biosynthesis; L-lysine biosynthesis via DAP pathway; (S)-tetrahydrodipicolinate from L-aspartate: step 3/4. Functionally, catalyzes the condensation of (S)-aspartate-beta-semialdehyde [(S)-ASA] and pyruvate to 4-hydroxy-tetrahydrodipicolinate (HTPA). The polypeptide is 4-hydroxy-tetrahydrodipicolinate synthase (Nitratiruptor sp. (strain SB155-2)).